The primary structure comprises 540 residues: Kinesin light chain (540 aa).

The stretch at 34 to 138 (LETSVKGVKE…NKHLKYMASI (105 aa)) forms a coiled coil. TPR repeat units lie at residues 206–239 (LRTL…LEKT), 248–281 (ATML…REKC), 290–323 (AATL…REKV), 332–365 (AKQL…YESK), 374–407 (AKTK…AHER), and 456–489 (TTTL…KKQH).

Belongs to the kinesin light chain family. As to quaternary structure, oligomeric complex composed of two heavy chains and two light chains. Interacts with unc-83; the interaction is direct. Interacts with unc-33; the interaction regulates unc-33 neurite localization. Interacts with casy-1.

The protein localises to the cytoplasm. Its subcellular location is the cytoskeleton. It is found in the nucleus envelope. In terms of biological role, kinesin is a microtubule-associated force-producing protein that may play a role in organelle transport. The light chain may function in coupling of cargo to the heavy chain or in the modulation of its ATPase activity. Recruits unc-83 (within the unc-83-unc-84 LINC complex) to the nuclear envelope during nuclear migration to mediate the link between the nuclear envelope and the microtubule cytoskeleton in hypodermal precursor cells. The polypeptide is Kinesin light chain (Caenorhabditis elegans).